Reading from the N-terminus, the 176-residue chain is Ribosome maturation factor RimM (176 aa).

Positions 99-174 (KNEFYITDLI…IVLIQPEIWN (76 aa)) constitute a PRC barrel domain.

This sequence belongs to the RimM family. In terms of assembly, binds ribosomal protein uS19.

It localises to the cytoplasm. Functionally, an accessory protein needed during the final step in the assembly of 30S ribosomal subunit, possibly for assembly of the head region. Essential for efficient processing of 16S rRNA. May be needed both before and after RbfA during the maturation of 16S rRNA. It has affinity for free ribosomal 30S subunits but not for 70S ribosomes. In Leptospira interrogans serogroup Icterohaemorrhagiae serovar copenhageni (strain Fiocruz L1-130), this protein is Ribosome maturation factor RimM.